The chain runs to 350 residues: UDP-N-acetylenolpyruvoylglucosamine reductase (350 aa).

Residues 24 to 195 (HVDATARWLL…VAVEFNLPLL (172 aa)) form the FAD-binding PCMH-type domain. Arg-172 is a catalytic residue. The active-site Proton donor is Ser-245. Residue Glu-342 is part of the active site.

This sequence belongs to the MurB family. FAD serves as cofactor.

The protein localises to the cytoplasm. The enzyme catalyses UDP-N-acetyl-alpha-D-muramate + NADP(+) = UDP-N-acetyl-3-O-(1-carboxyvinyl)-alpha-D-glucosamine + NADPH + H(+). Its pathway is cell wall biogenesis; peptidoglycan biosynthesis. In terms of biological role, cell wall formation. This is UDP-N-acetylenolpyruvoylglucosamine reductase from Xanthomonas campestris pv. campestris (strain 8004).